The following is a 116-amino-acid chain: MNNIRAERVGEQMKQEIMDIVNNKVKDPRVGFLTITDVELTNDLSQAKVYLTVLGNDKEVDNTFKALHKATGFIKSELGSRMRLRIIPELTFEYDESIEYGNKIERMIQELHKNDK.

This sequence belongs to the RbfA family. Monomer. Binds 30S ribosomal subunits, but not 50S ribosomal subunits or 70S ribosomes.

Its subcellular location is the cytoplasm. Its function is as follows. One of several proteins that assist in the late maturation steps of the functional core of the 30S ribosomal subunit. Associates with free 30S ribosomal subunits (but not with 30S subunits that are part of 70S ribosomes or polysomes). Required for efficient processing of 16S rRNA. May interact with the 5'-terminal helix region of 16S rRNA. The sequence is that of Ribosome-binding factor A from Staphylococcus epidermidis (strain ATCC 35984 / DSM 28319 / BCRC 17069 / CCUG 31568 / BM 3577 / RP62A).